We begin with the raw amino-acid sequence, 515 residues long: MTALTLSTAGAATLRADALVVGVAKGVKGPVLAPGSEAVDKAFDGKLAAVLATLGATGAEGELTKLPAASGLKAPVVVAVGLGPVPDKEDAYDAEALRRAAGTAARALTGSKKAGFALPAASVEDAAAVAEGALLGAYAFTAYQGGENKLAPKDAKSKGNGPKLPLAEVALLGAKPRDKAYKAAVERSLALVEEINRARDLVNTPPNDLYPESFAAVATAAGKEHGVKVQVLDEKALVKGGFGGILGVGQGASRGPRLVKLAYTHPKAEKTLALVGKGITYDSGGISLKPAGHNETMKCDMAGAAAVFAAVVTAARLGLKVNVTGWLALAENMPSGNATRPGDVLRMYSGKTVEVLNTDAEGRLVLADALTRASEEKPDAIVDVATLTGAMVLALGNRTFGVMANDDAFRTSLHEIAEEVGEPSWPMPLPADLRKGMDSPTADIANMGERMGGGLVAGLFLKEFVGEGIAWAHLDIAGPAFHEGAPYGYTPKGGTGSAVRTLVRLAERTAAGDLG.

Residues K277 and D282 each coordinate Mn(2+). Residue K289 is part of the active site. D300, D359, and E361 together coordinate Mn(2+). Residue R363 is part of the active site.

It belongs to the peptidase M17 family. Requires Mn(2+) as cofactor.

It localises to the cytoplasm. It carries out the reaction Release of an N-terminal amino acid, Xaa-|-Yaa-, in which Xaa is preferably Leu, but may be other amino acids including Pro although not Arg or Lys, and Yaa may be Pro. Amino acid amides and methyl esters are also readily hydrolyzed, but rates on arylamides are exceedingly low.. The enzyme catalyses Release of an N-terminal amino acid, preferentially leucine, but not glutamic or aspartic acids.. Functionally, presumably involved in the processing and regular turnover of intracellular proteins. Catalyzes the removal of unsubstituted N-terminal amino acids from various peptides. The protein is Probable cytosol aminopeptidase of Streptomyces griseus subsp. griseus (strain JCM 4626 / CBS 651.72 / NBRC 13350 / KCC S-0626 / ISP 5235).